Here is a 475-residue protein sequence, read N- to C-terminus: Mucin-1 (475 aa).

The signal sequence occupies residues 1-23 (MTPGTQSLFFLLLLLTVLTVVTG). The segment at 23-252 (GSGHASSTPG…SPLTSSNHST (230 aa)) is disordered. The Extracellular segment spans residues 24–380 (SGHASSTPGG…QSGAGVPGWG (357 aa)). The segment covering 38–48 (SATQRSSMPSS) has biased composition (polar residues). Low complexity predominate over residues 54–75 (VSMTSSVLSSHSPGSGSSTTQG). Repeat copies occupy residues 86-105 (PASG…PVTR), 106-125 (PAPG…PDTR), 126-145 (PALG…PDTR), 146-165 (PTLG…PDTR), and 166-185 (PTLG…SGSA). The segment at 86-185 (PASGSAATWG…HNVTSASGSA (100 aa)) is 5 X 20 AA approximate tandem repeats. A compositionally biased stretch (polar residues) spans 90 to 102 (SAATWGQDVTSVP). O-linked (GalNAc...) threonine glycosylation is found at Thr93 and Thr99. Ser100 carries an O-linked (GalNAc...) serine glycan. Residue Thr104 is glycosylated (O-linked (GalNAc...) threonine). The span at 109–122 (GSTTSPAQDVTSAP) shows a compositional bias: polar residues. N-linked (GlcNAc...) asparagine glycosylation is present at Asn177. Over residues 180–190 (SASGSASGSAS) the composition is skewed to low complexity. 2 stretches are compositionally biased toward polar residues: residues 191–213 (TLVH…TPFS) and 233–252 (DASS…NHST). Residues Asn195, Asn249, Asn275, and Asn353 are each glycosylated (N-linked (GlcNAc...) asparagine). The SEA domain occupies 259–368 (GVSFFFLSFH…VSVSDVPFPF (110 aa)). A helical membrane pass occupies residues 381 to 401 (IALLVLVCVLVALAIVYLIAL). Residues 402-475 (AVCQCRRKNY…PAVAATSANL (74 aa)) lie on the Cytoplasmic side of the membrane. Residues Cys404 and Cys406 are each lipidated (S-palmitoyl cysteine). Residues 412 to 448 (GQLDIFPARDAYHPMSEYPTYHTHGRYVPPSSTNRSP) are interaction with P53. Residue Tyr423 is modified to Phosphotyrosine; by PDGFR. The Interaction with GRB2 signature appears at 423-426 (YHPM). Position 432 is a phosphotyrosine (Tyr432). Residues 435–460 (HGRYVPPSSTNRSPYEKVSEGNGGSS) are disordered. Tyr438 bears the Phosphotyrosine; by PDGFR mark. The interval 443-450 (STNRSPYE) is required for interaction with GSK3B. Thr444 carries the phosphothreonine; by PKC/PRKCD modification. The residue at position 447 (Ser447) is a Phosphoserine; by GSK3-beta. A Phosphotyrosine; by CSK, EGFR and SRC modification is found at Tyr449. The short motif at 449–452 (YEKV) is the Interaction with SRC and ESR1 element. The required for interaction with beta- and gamma-catenins stretch occupies residues 453-461 (SEGNGGSSL). Position 463 is a phosphotyrosine (Tyr463). The Required for interaction with AP1S2 signature appears at 463–466 (YTNP).

The alpha subunit forms a tight, non-covalent heterodimeric complex with the proteolytically-released beta-subunit. Binds directly the SH2 domain of GRB2, and forms a MUC1/GRB2/SOS1 complex involved in RAS signaling. The cytoplasmic tail (MUC1CT) interacts with several proteins such as SRC, CTNNB1 and ERBs. Interaction with the SH2 domain of CSK decreases interaction with GSK3B. Interacts with CTNNB1/beta-catenin and JUP/gamma-catenin and promotes cell adhesion. Interaction with JUP/gamma-catenin is induced by heregulin. Binds PRKCD, ERBB2, ERBB3 and ERBB4. Heregulin (HRG) stimulates the interaction with ERBB2 and, to a much lesser extent, the interaction with ERBB3 and ERBB4. Interacts with P53 in response to DNA damage. Interacts with KLF4. Interacts with estrogen receptor alpha/ESR1, through its DNA-binding domain, and stimulates its transcription activity. Binds ADAM17. Post-translationally, probably both N- and O-glycosylated (in repeat region). In terms of processing, proteolytic cleavage in the SEA domain occurs in the endoplasmic reticulum by an autoproteolytic mechanism and requires the full-length SEA domain as well as requiring a Ser, Thr or Cys residue at the P + 1 site. Ectodomain shedding is mediated by ADAM17 in uterine epithelial cells. Dual palmitoylation on cysteine residues in the CQC motif is required for recycling from endosomes back to the plasma membrane. Post-translationally, phosphorylated on tyrosines and serine residues in the C-terminal. Phosphorylation on tyrosines in the C-terminal increases the nuclear location of MUC1 and beta-catenin. Phosphorylation by PKC delta induces binding of MUC1 to beta-catenin/CTNNB1 and thus decreases the formation of the beta-catenin/E-cadherin complex. Src-mediated phosphorylation inhibits interaction with GSK3B. Csk- or Src- or EGFR-mediated phosphorylation on Tyr-449 increases binding to beta-catenin/CTNNB1. GSK3B-mediated phosphorylation on Ser-447 decreases this interaction but restores the formation of the beta-cadherin/E-cadherin complex. On T-cell receptor activation, phosphorylated by LCK. PDGFR-mediated phosphorylation increases nuclear colocalization of MUC1CT and CTNNB1.

The protein resides in the apical cell membrane. Its subcellular location is the cell membrane. It localises to the cytoplasm. The protein localises to the nucleus. The alpha subunit has cell adhesive properties. Can act both as an adhesion and an anti-adhesion protein. May provide a protective layer on epithelial cells against bacterial and enzyme attack. Its function is as follows. The beta subunit contains a C-terminal domain which is involved in cell signaling, through phosphorylations and protein-protein interactions. Modulates signaling in ERK, Src and NF-kappaB pathways. In activated T-cells, influences directly or indirectly the Ras/MAPK pathway. Promotes tumor progression. Regulates P53-mediated transcription and determines cell fate in the genotoxic stress response. Binds, together with KLF4, the PE21 promoter element of P53 and represses P53 activity. The protein is Mucin-1 (MUC1) of Hylobates lar (Lar gibbon).